Here is an 892-residue protein sequence, read N- to C-terminus: Translation initiation factor IF-2 (892 aa).

The tract at residues 65 to 296 (KTRSTLNIPS…KGKRKPSTLQ (232 aa)) is disordered. Positions 68 to 82 (STLNIPSTGGKSKSV) are enriched in polar residues. The segment covering 99–217 (EQAKAEEQAQ…KMAAENEGKW (119 aa)) has biased composition (basic and acidic residues). A compositionally biased stretch (polar residues) spans 224 to 237 (QTESADYHVTTSQH). A compositionally biased stretch (basic and acidic residues) spans 239–254 (RAAEDENDAKVEGDRR). The span at 255–269 (SRTRGGKATKQKKGN) shows a compositional bias: basic residues. Over residues 270–283 (KLSESKADREEARA) the composition is skewed to basic and acidic residues. Residues 391–560 (HRAPVVTIMG…LLQAEVLELK (170 aa)) enclose the tr-type G domain. The G1 stretch occupies residues 400–407 (GHVDHGKT). 400-407 (GHVDHGKT) is a GTP binding site. The G2 stretch occupies residues 425 to 429 (GITQH). The interval 446–449 (DTPG) is G3. GTP contacts are provided by residues 446–450 (DTPGH) and 500–503 (NKID). The tract at residues 500–503 (NKID) is G4. Positions 536–538 (SAK) are G5.

Belongs to the TRAFAC class translation factor GTPase superfamily. Classic translation factor GTPase family. IF-2 subfamily.

It is found in the cytoplasm. Functionally, one of the essential components for the initiation of protein synthesis. Protects formylmethionyl-tRNA from spontaneous hydrolysis and promotes its binding to the 30S ribosomal subunits. Also involved in the hydrolysis of GTP during the formation of the 70S ribosomal complex. In Yersinia pseudotuberculosis serotype O:1b (strain IP 31758), this protein is Translation initiation factor IF-2.